The chain runs to 98 residues: Co-chaperonin GroES (98 aa).

The protein belongs to the GroES chaperonin family. As to quaternary structure, heptamer of 7 subunits arranged in a ring. Interacts with the chaperonin GroEL.

It localises to the cytoplasm. Together with the chaperonin GroEL, plays an essential role in assisting protein folding. The GroEL-GroES system forms a nano-cage that allows encapsulation of the non-native substrate proteins and provides a physical environment optimized to promote and accelerate protein folding. GroES binds to the apical surface of the GroEL ring, thereby capping the opening of the GroEL channel. This chain is Co-chaperonin GroES, found in Coprothermobacter proteolyticus (strain ATCC 35245 / DSM 5265 / OCM 4 / BT).